A 411-amino-acid polypeptide reads, in one-letter code: uncharacterized protein (411 aa).

This is an uncharacterized protein from Magallana gigas (Pacific oyster).